The primary structure comprises 166 residues: Transcription antitermination protein NusB (166 aa).

Residues 1 to 18 (MISDESDRFNPRDPKPAD) show a composition bias toward basic and acidic residues. The disordered stretch occupies residues 1-30 (MISDESDRFNPRDPKPADAGKPSKSAKRRE).

It belongs to the NusB family.

Its function is as follows. Involved in transcription antitermination. Required for transcription of ribosomal RNA (rRNA) genes. Binds specifically to the boxA antiterminator sequence of the ribosomal RNA (rrn) operons. This is Transcription antitermination protein NusB from Pseudomonas fluorescens (strain Pf0-1).